We begin with the raw amino-acid sequence, 557 residues long: Potassium-transporting ATPase potassium-binding subunit (557 aa).

12 helical membrane passes run 5–25, 63–83, 132–152, 170–190, 253–273, 283–303, 329–349, 356–376, 379–399, 416–436, 484–504, and 526–546; these read GFLLIATFLLVLMVLARPLGS, LCAILGLNMLGLAVLFFMLLG, GLTVQNFLSAASGIAVIFALI, LLRITLWVLVPVALLIALFFI, FVQMLAIFLIPTALCFAFGEV, LLWAMSVIFVICVGVVMWAEV, VLVSSLFAVVTTAASCGAVIA, ALGGMVPMWLMQIGEVVFGGV, GLYGMMLFVLLAVFIAGLMIG, LTALAILVTPTLVLMGAALAM, LLAFCMFVGRFGVIIPVMAIA, and LFVGLLIGTVLLVGALTFIPA.

The protein belongs to the KdpA family. As to quaternary structure, the system is composed of three essential subunits: KdpA, KdpB and KdpC.

Its subcellular location is the cell inner membrane. In terms of biological role, part of the high-affinity ATP-driven potassium transport (or Kdp) system, which catalyzes the hydrolysis of ATP coupled with the electrogenic transport of potassium into the cytoplasm. This subunit binds the periplasmic potassium ions and delivers the ions to the membrane domain of KdpB through an intramembrane tunnel. The sequence is that of Potassium-transporting ATPase potassium-binding subunit from Escherichia coli O9:H4 (strain HS).